The following is a 104-amino-acid chain: Large ribosomal subunit protein eL30 (104 aa).

This sequence belongs to the eukaryotic ribosomal protein eL30 family.

This chain is Large ribosomal subunit protein eL30 (RPL30), found in Tetrahymena thermophila (strain SB210).